Here is a 488-residue protein sequence, read N- to C-terminus: Aspartyl/glutamyl-tRNA(Asn/Gln) amidotransferase subunit B (488 aa).

This sequence belongs to the GatB/GatE family. GatB subfamily. In terms of assembly, heterotrimer of A, B and C subunits.

It carries out the reaction L-glutamyl-tRNA(Gln) + L-glutamine + ATP + H2O = L-glutaminyl-tRNA(Gln) + L-glutamate + ADP + phosphate + H(+). The enzyme catalyses L-aspartyl-tRNA(Asn) + L-glutamine + ATP + H2O = L-asparaginyl-tRNA(Asn) + L-glutamate + ADP + phosphate + 2 H(+). Allows the formation of correctly charged Asn-tRNA(Asn) or Gln-tRNA(Gln) through the transamidation of misacylated Asp-tRNA(Asn) or Glu-tRNA(Gln) in organisms which lack either or both of asparaginyl-tRNA or glutaminyl-tRNA synthetases. The reaction takes place in the presence of glutamine and ATP through an activated phospho-Asp-tRNA(Asn) or phospho-Glu-tRNA(Gln). This Chlamydia trachomatis serovar A (strain ATCC VR-571B / DSM 19440 / HAR-13) protein is Aspartyl/glutamyl-tRNA(Asn/Gln) amidotransferase subunit B.